We begin with the raw amino-acid sequence, 569 residues long: Nucleoprotein (569 aa).

Positions 54–241 are binding site for the cap structure m7GTP; it reads MRKERRDDND…IDTKKSSLNI (188 aa). Positions 389 and 391 each coordinate Mn(2+). Zn(2+)-binding residues include glutamate 399, cysteine 506, histidine 509, and cysteine 529. Mn(2+) is bound at residue aspartate 533.

It belongs to the arenaviridae nucleocapsid protein family. As to quaternary structure, homomultimerizes to form the nucleocapsid. Binds to viral genomic RNA. Interacts with glycoprotein G2. Interacts with protein Z; this interaction probably directs the encapsidated genome to budding sites. Interacts with protein L; this interaction does not interfere with Z-L interaction. Interacts with host IKBKE (via Protein kinase domain); the interaction inhibits IKBKE kinase activity.

The protein resides in the virion. Its subcellular location is the host cytoplasm. Functionally, encapsidates the genome, protecting it from nucleases. The encapsidated genomic RNA is termed the nucleocapsid (NC). Serves as template for viral transcription and replication. The increased presence of protein N in host cell does not seem to trigger the switch from transcription to replication as observed in other negative strain RNA viruses. Through the interaction with host IKBKE, strongly inhibits the phosphorylation and nuclear translocation of host IRF3, a protein involved in interferon activation pathway, leading to the inhibition of interferon-beta and IRF3-dependent promoters activation. Also encodes a functional 3'-5' exoribonuclease that degrades preferentially dsRNA substrates and thereby participates in the suppression of interferon induction. The polypeptide is Nucleoprotein (Lassa virus (strain Mouse/Sierra Leone/Josiah/1976) (LASV)).